Here is a 111-residue protein sequence, read N- to C-terminus: Small ribosomal subunit protein uS10 (111 aa).

Belongs to the universal ribosomal protein uS10 family. As to quaternary structure, part of the 30S ribosomal subunit.

Involved in the binding of tRNA to the ribosomes. In Protochlamydia amoebophila (strain UWE25), this protein is Small ribosomal subunit protein uS10.